Consider the following 338-residue polypeptide: Anthranilate phosphoribosyltransferase (338 aa).

Residues Gly81, 84-85 (GD), Thr89, 91-94 (NIST), 109-117 (KHGNRAVSS), and Ser121 contribute to the 5-phospho-alpha-D-ribose 1-diphosphate site. Gly81 contributes to the anthranilate binding site. Ser93 provides a ligand contact to Mg(2+). Asn112 contacts anthranilate. Arg167 is a binding site for anthranilate. Mg(2+)-binding residues include Asp226 and Glu227.

This sequence belongs to the anthranilate phosphoribosyltransferase family. Homodimer. It depends on Mg(2+) as a cofactor.

It carries out the reaction N-(5-phospho-beta-D-ribosyl)anthranilate + diphosphate = 5-phospho-alpha-D-ribose 1-diphosphate + anthranilate. The protein operates within amino-acid biosynthesis; L-tryptophan biosynthesis; L-tryptophan from chorismate: step 2/5. In terms of biological role, catalyzes the transfer of the phosphoribosyl group of 5-phosphorylribose-1-pyrophosphate (PRPP) to anthranilate to yield N-(5'-phosphoribosyl)-anthranilate (PRA). In Myxococcus xanthus (strain DK1622), this protein is Anthranilate phosphoribosyltransferase.